Here is a 336-residue protein sequence, read N- to C-terminus: Ribosomal RNA small subunit methyltransferase C (336 aa).

Belongs to the methyltransferase superfamily. RsmC family. As to quaternary structure, monomer.

The protein localises to the cytoplasm. The enzyme catalyses guanosine(1207) in 16S rRNA + S-adenosyl-L-methionine = N(2)-methylguanosine(1207) in 16S rRNA + S-adenosyl-L-homocysteine + H(+). In terms of biological role, specifically methylates the guanine in position 1207 of 16S rRNA in the 30S particle. The polypeptide is Ribosomal RNA small subunit methyltransferase C (Buchnera aphidicola subsp. Schizaphis graminum (strain Sg)).